The following is a 209-amino-acid chain: MEDLLDLGGERRRGSTTSGPRMGRRAQQESAQVENHLSGKNSSILTGEVAPPPKPPRRQGGWADDSMKTSKSGRRASEEVEEGSHRLRQQSFGGSDDGGDIPVIPDLEDVQEEDFALQVAAPPSIQVNRVMTYRDLDNDLMKYAAFQTLDGEIDLKLLTKVLAPEHEVREDDVNWDWDRLYTEVSSELLSEWDLLQSEKEDPMGQPAHT.

N-acetylmethionine is present on Met1. The interval 1 to 100 (MEDLLDLGGE…SFGGSDDGGD (100 aa)) is disordered. The span at 28 to 45 (QESAQVENHLSGKNSSIL) shows a compositional bias: polar residues. Residues 75–85 (RASEEVEEGSH) show a composition bias toward basic and acidic residues. Ser77 carries the post-translational modification Phosphoserine.

This sequence belongs to the IFT43 family. In terms of assembly, component of the IFT complex A (IFT-A) complex. IFT-A complex is divided into a core subcomplex composed of IFT122:IFT140:WDR19 which is associated with TULP3 and a peripheral subcomplex composed of IFT43:WDR35:TTC21B. Interacts directy with IFT122, WDR35 and TTC21B.

Its subcellular location is the cytoplasm. The protein resides in the cytoskeleton. It is found in the cell projection. It localises to the cilium. Functionally, as a component of IFT complex A (IFT-A), a complex required for retrograde ciliary transport and entry into cilia of G protein-coupled receptors (GPCRs), it is involved in ciliogenesis. Involved in retrograde ciliary transport along microtubules from the ciliary tip to the base. The polypeptide is Intraflagellar transport protein 43 homolog (IFT43) (Canis lupus familiaris (Dog)).